The sequence spans 335 residues: Glycerol-3-phosphate dehydrogenase [NAD(P)+] (335 aa).

The NADPH site is built by serine 12, tryptophan 13, and lysine 107. Residues lysine 107, glycine 138, and serine 140 each coordinate sn-glycerol 3-phosphate. NADPH is bound at residue alanine 142. Positions 193, 246, 256, 257, and 258 each coordinate sn-glycerol 3-phosphate. Residue lysine 193 is the Proton acceptor of the active site. An NADPH-binding site is contributed by arginine 257. Residues valine 281 and glutamate 283 each contribute to the NADPH site.

Belongs to the NAD-dependent glycerol-3-phosphate dehydrogenase family.

It is found in the cytoplasm. The catalysed reaction is sn-glycerol 3-phosphate + NAD(+) = dihydroxyacetone phosphate + NADH + H(+). It catalyses the reaction sn-glycerol 3-phosphate + NADP(+) = dihydroxyacetone phosphate + NADPH + H(+). It functions in the pathway membrane lipid metabolism; glycerophospholipid metabolism. Functionally, catalyzes the reduction of the glycolytic intermediate dihydroxyacetone phosphate (DHAP) to sn-glycerol 3-phosphate (G3P), the key precursor for phospholipid synthesis. The sequence is that of Glycerol-3-phosphate dehydrogenase [NAD(P)+] from Geobacter metallireducens (strain ATCC 53774 / DSM 7210 / GS-15).